The sequence spans 308 residues: Putative S-adenosyl-L-methionine-dependent methyltransferase MAB_4584c (308 aa).

S-adenosyl-L-methionine-binding positions include Asp131 and 160–161; that span reads DL.

It belongs to the UPF0677 family.

Exhibits S-adenosyl-L-methionine-dependent methyltransferase activity. The sequence is that of Putative S-adenosyl-L-methionine-dependent methyltransferase MAB_4584c from Mycobacteroides abscessus (strain ATCC 19977 / DSM 44196 / CCUG 20993 / CIP 104536 / JCM 13569 / NCTC 13031 / TMC 1543 / L948) (Mycobacterium abscessus).